Reading from the N-terminus, the 305-residue chain is UDP-N-acetylenolpyruvoylglucosamine reductase (305 aa).

One can recognise an FAD-binding PCMH-type domain in the interval 33–198 (RVGGPAQVLF…TGGTFRGRRA (166 aa)). Arg178 is a catalytic residue. Ser227 (proton donor) is an active-site residue. Glu297 is a catalytic residue.

The protein belongs to the MurB family. Requires FAD as cofactor.

It localises to the cytoplasm. The catalysed reaction is UDP-N-acetyl-alpha-D-muramate + NADP(+) = UDP-N-acetyl-3-O-(1-carboxyvinyl)-alpha-D-glucosamine + NADPH + H(+). It functions in the pathway cell wall biogenesis; peptidoglycan biosynthesis. Its function is as follows. Cell wall formation. The polypeptide is UDP-N-acetylenolpyruvoylglucosamine reductase (Nitrobacter hamburgensis (strain DSM 10229 / NCIMB 13809 / X14)).